Here is a 104-residue protein sequence, read N- to C-terminus: Small ribosomal subunit protein bS16 (104 aa).

The protein belongs to the bacterial ribosomal protein bS16 family.

In Gemmatimonas aurantiaca (strain DSM 14586 / JCM 11422 / NBRC 100505 / T-27), this protein is Small ribosomal subunit protein bS16.